The following is a 535-amino-acid chain: Bifunctional purine biosynthesis protein PurH (535 aa).

In terms of domain architecture, MGS-like spans 1 to 148 (MNNARPIRRA…KNHKDTTIIV (148 aa)).

It belongs to the PurH family.

It catalyses the reaction (6R)-10-formyltetrahydrofolate + 5-amino-1-(5-phospho-beta-D-ribosyl)imidazole-4-carboxamide = 5-formamido-1-(5-phospho-D-ribosyl)imidazole-4-carboxamide + (6S)-5,6,7,8-tetrahydrofolate. It carries out the reaction IMP + H2O = 5-formamido-1-(5-phospho-D-ribosyl)imidazole-4-carboxamide. Its pathway is purine metabolism; IMP biosynthesis via de novo pathway; 5-formamido-1-(5-phospho-D-ribosyl)imidazole-4-carboxamide from 5-amino-1-(5-phospho-D-ribosyl)imidazole-4-carboxamide (10-formyl THF route): step 1/1. It functions in the pathway purine metabolism; IMP biosynthesis via de novo pathway; IMP from 5-formamido-1-(5-phospho-D-ribosyl)imidazole-4-carboxamide: step 1/1. This Shewanella woodyi (strain ATCC 51908 / MS32) protein is Bifunctional purine biosynthesis protein PurH.